Here is a 391-residue protein sequence, read N- to C-terminus: 1-deoxy-D-xylulose 5-phosphate reductoisomerase (391 aa).

NADPH-binding residues include Thr-10, Gly-11, Ser-12, Ile-13, Asn-38, and Asn-122. Lys-123 is a binding site for 1-deoxy-D-xylulose 5-phosphate. Residue Glu-124 coordinates NADPH. Asp-148 serves as a coordination point for Mn(2+). Ser-149, Glu-150, Ser-173, and His-196 together coordinate 1-deoxy-D-xylulose 5-phosphate. Residue Glu-150 coordinates Mn(2+). NADPH is bound at residue Gly-202. 1-deoxy-D-xylulose 5-phosphate-binding residues include Ser-209, Asn-214, Lys-215, and Glu-218. Residue Glu-218 participates in Mn(2+) binding.

This sequence belongs to the DXR family. The cofactor is Mg(2+). Requires Mn(2+) as cofactor.

It catalyses the reaction 2-C-methyl-D-erythritol 4-phosphate + NADP(+) = 1-deoxy-D-xylulose 5-phosphate + NADPH + H(+). It participates in isoprenoid biosynthesis; isopentenyl diphosphate biosynthesis via DXP pathway; isopentenyl diphosphate from 1-deoxy-D-xylulose 5-phosphate: step 1/6. In terms of biological role, catalyzes the NADPH-dependent rearrangement and reduction of 1-deoxy-D-xylulose-5-phosphate (DXP) to 2-C-methyl-D-erythritol 4-phosphate (MEP). The polypeptide is 1-deoxy-D-xylulose 5-phosphate reductoisomerase (Wolbachia pipientis subsp. Culex pipiens (strain wPip)).